The sequence spans 159 residues: Ribosomal RNA large subunit methyltransferase H (159 aa).

S-adenosyl-L-methionine is bound by residues Leu-76, Gly-108, and Phe-127–Phe-132.

It belongs to the RNA methyltransferase RlmH family. As to quaternary structure, homodimer.

It is found in the cytoplasm. The enzyme catalyses pseudouridine(1915) in 23S rRNA + S-adenosyl-L-methionine = N(3)-methylpseudouridine(1915) in 23S rRNA + S-adenosyl-L-homocysteine + H(+). Its function is as follows. Specifically methylates the pseudouridine at position 1915 (m3Psi1915) in 23S rRNA. In Bacillus pumilus (strain SAFR-032), this protein is Ribosomal RNA large subunit methyltransferase H.